The following is a 1257-amino-acid chain: MVVALRYVWPLLLCSPCLLIQIPEEYEGHHVMEPPVITEQSPRRLVVFPTDDISLKCEASGKPEVQFRWTRDGVHFKPKEELGVTVYQSPHSGSFTITGNNSNFAQRFQGIYRCFASNKLGTAMSHEIRLMAEGAPKWPKETVKPVEVEEGESVVLPCNPPPSAEPLRIYWMNSKILHIKQDERVTMGQNGNLYFANVLTSDNHSDYICHAHFPGTRTIIQKEPIDLRVKATNSMIDRKPRLLFPTNSSSHLVALQGQPLVLECIAEGFPTPTIKWLRPSGPMPADRVTYQNHNKTLQLLKVGEEDDGEYRCLAENSLGSARHAYYVTVEAAPYWLHKPQSHLYGPGETARLDCQVQGRPQPEVTWRINGIPVEELAKDQKYRIQRGALILSNVQPSDTMVTQCEARNRHGLLLANAYIYVVQLPAKILTADNQTYMAVQGSTAYLLCKAFGAPVPSVQWLDEDGTTVLQDERFFPYANGTLGIRDLQANDTGRYFCLAANDQNNVTIMANLKVKDATQITQGPRSTIEKKGSRVTFTCQASFDPSLQPSITWRGDGRDLQELGDSDKYFIEDGRLVIHSLDYSDQGNYSCVASTELDVVESRAQLLVVGSPGPVPRLVLSDLHLLTQSQVRVSWSPAEDHNAPIEKYDIEFEDKEMAPEKWYSLGKVPGNQTSTTLKLSPYVHYTFRVTAINKYGPGEPSPVSETVVTPEAAPEKNPVDVKGEGNETTNMVITWKPLRWMDWNAPQVQYRVQWRPQGTRGPWQEQIVSDPFLVVSNTSTFVPYEIKVQAVNSQGKGPEPQVTIGYSGEDYPQAIPELEGIEILNSSAVLVKWRPVDLAQVKGHLRGYNVTYWREGSQRKHSKRHIHKDHVVVPANTTSVILSGLRPYSSYHLEVQAFNGRGSGPASEFTFSTPEGVPGHPEALHLECQSNTSLLLRWQPPLSHNGVLTGYVLSYHPLDEGGKGQLSFNLRDPELRTHNLTDLSPHLRYRFQLQATTKEGPGEAIVREGGTMALSGISDFGNISATAGENYSVVSWVPKEGQCNFRFHILFKALGEEKGGASLSPQYVSYNQSSYTQWDLQPDTDYEIHLFKERMFRHQMAVKTNGTGRVRLPPAGFATEGWFIGFVSAIILLLLVLLILCFIKRSKGGKYSVKDKEDTQVDSEARPMKDETFGEYRSLESDNEEKAFGSSQPSLNGDIKPLGSDDSLADYGGSVDVQFNEDGSFIGQYSGKKEKEAAGGNDSSGATSPINPAVALE.

A signal peptide spans M1 to L19. Residues I20–E1120 lie on the Extracellular side of the membrane. Ig-like C2-type domains follow at residues P35 to S125, P139 to D226, P240 to T328, P333 to Y420, P425 to T507, and T518 to L607. Cystine bridges form between C57-C114 and C158-C209. N100, N203, N247, and N294 each carry an N-linked (GlcNAc...) asparagine glycan. Intrachain disulfides connect C264-C312 and C354-C404. N-linked (GlcNAc...) asparagine glycosylation is found at N433, N479, N490, and N505. Residues C448 and C497 are joined by a disulfide bond. Residues C539 and C591 are joined by a disulfide bond. Positions R554–D556 match the Cell attachment site motif. N588 and N671 each carry an N-linked (GlcNAc...) asparagine glycan. Fibronectin type-III domains are found at residues V615–A712, N717–D810, A814–G916, H920–S1015, and G1016–A1115. Residues G698–G725 are disordered. The span at A713–G725 shows a compositional bias: basic and acidic residues. N-linked (GlcNAc...) asparagine glycans are attached at residues N726, N777, N825, N849, N876, N979, N1022, N1030, N1071, and N1105. Residues G1121 to I1143 traverse the membrane as a helical segment. Over K1144–E1257 the chain is Cytoplasmic. 4 positions are modified to phosphoserine: S1163, T1172, R1177, and S1178. Basic and acidic residues predominate over residues Y1176–A1187. Disordered regions lie at residues Y1176–S1207 and I1226–E1257. S1181 is modified (phosphoserine; by CaMK2). Phosphoserine occurs at positions 1194, 1243, 1244, and 1248. The segment covering N1241 to I1250 has biased composition (polar residues).

This sequence belongs to the immunoglobulin superfamily. L1/neurofascin/NgCAM family. Interacts with SHTN1; the interaction occurs in axonal growth cones. Interacts with isoform 2 of BSG.

It is found in the cell membrane. The protein localises to the cell projection. It localises to the growth cone. Its subcellular location is the axon. The protein resides in the dendrite. In terms of biological role, neural cell adhesion molecule involved in the dynamics of cell adhesion and in the generation of transmembrane signals at tyrosine kinase receptors. During brain development, critical in multiple processes, including neuronal migration, axonal growth and fasciculation, and synaptogenesis. In the mature brain, plays a role in the dynamics of neuronal structure and function, including synaptic plasticity. In Homo sapiens (Human), this protein is Neural cell adhesion molecule L1 (L1CAM).